Consider the following 86-residue polypeptide: Immunity protein CdiI-1 (86 aa).

In terms of assembly, interacts with the C-terminal fragment (CT) of cognate toxin protein CdiA-EC869.

Functionally, immunity protein component of a toxin-immunity protein module, which functions as a cellular contact-dependent growth inhibition (CDI) system. CDI modules allow bacteria to communicate with and inhibit the growth of closely related neighboring bacteria in a contact-dependent fashion. Neutralizes the toxic activity of cognate toxin CdiA-EC869 (the C-terminal 289 residue CT fragment). Does not inhibit toxic activity of CdiA from other toxin-immunity modules or strains of E.coli. The chain is Immunity protein CdiI-1 from Escherichia coli O157:H7 (strain EC869).